Reading from the N-terminus, the 198-residue chain is Ribonuclease HII (198 aa).

Positions 10–198 constitute an RNase H type-2 domain; it reads QLVAGVDEVG…PVKRALGLAS (189 aa). A divalent metal cation-binding residues include Asp-16, Glu-17, and Asp-108.

Belongs to the RNase HII family. Requires Mn(2+) as cofactor. Mg(2+) serves as cofactor.

The protein localises to the cytoplasm. The catalysed reaction is Endonucleolytic cleavage to 5'-phosphomonoester.. Its function is as follows. Endonuclease that specifically degrades the RNA of RNA-DNA hybrids. This chain is Ribonuclease HII, found in Escherichia coli O81 (strain ED1a).